We begin with the raw amino-acid sequence, 186 residues long: Translation initiation factor IF-3 (186 aa).

The protein belongs to the IF-3 family. In terms of assembly, monomer.

The protein localises to the cytoplasm. IF-3 binds to the 30S ribosomal subunit and shifts the equilibrium between 70S ribosomes and their 50S and 30S subunits in favor of the free subunits, thus enhancing the availability of 30S subunits on which protein synthesis initiation begins. The protein is Translation initiation factor IF-3 of Borreliella afzelii (strain PKo) (Borrelia afzelii).